Here is a 137-residue protein sequence, read N- to C-terminus: Small ribosomal subunit protein uS11 (137 aa).

The disordered stretch occupies residues 116–137; that stretch reads EDVTPIPHDGTRPKGGRRGRRV.

It belongs to the universal ribosomal protein uS11 family. Part of the 30S ribosomal subunit.

Located on the platform of the 30S subunit. This chain is Small ribosomal subunit protein uS11, found in Pyrococcus furiosus (strain ATCC 43587 / DSM 3638 / JCM 8422 / Vc1).